We begin with the raw amino-acid sequence, 284 residues long: Signal peptidase I (284 aa).

Residues 4-22 (NFPLLLVIAVAVCGALALV) form a helical membrane-spanning segment. The Cytoplasmic portion of the chain corresponds to 23–58 (DLVLFAPRRRAAISSYEGQVNEPDPAVLEKLNKEPL). A helical membrane pass occupies residues 59–77 (LVEYGKSFFPVLFIVLVLR). The Periplasmic segment spans residues 78 to 284 (SFLVEPFQIP…PNFSRVGVIH (207 aa)). Residues serine 90 and lysine 145 contribute to the active site.

The protein belongs to the peptidase S26 family.

The protein localises to the cell inner membrane. It carries out the reaction Cleavage of hydrophobic, N-terminal signal or leader sequences from secreted and periplasmic proteins.. The protein is Signal peptidase I (lepB) of Pseudomonas aeruginosa (strain ATCC 15692 / DSM 22644 / CIP 104116 / JCM 14847 / LMG 12228 / 1C / PRS 101 / PAO1).